The following is a 142-amino-acid chain: Large ribosomal subunit protein uL13 (142 aa).

The protein belongs to the universal ribosomal protein uL13 family. In terms of assembly, part of the 50S ribosomal subunit.

Functionally, this protein is one of the early assembly proteins of the 50S ribosomal subunit, although it is not seen to bind rRNA by itself. It is important during the early stages of 50S assembly. The sequence is that of Large ribosomal subunit protein uL13 from Shigella dysenteriae serotype 1 (strain Sd197).